A 1272-amino-acid chain; its full sequence is Myosin-3 (1272 aa).

The interval 1 to 20 (MAVIKKGARRKDVKEPKKRS) is disordered. Positions 36 to 715 (VGISDLTLLS…SLFALEDMRD (680 aa)) constitute a Myosin motor domain. 129–136 (GESGAGKT) is an ATP binding site. The residue at position 357 (S357) is a Phosphoserine. An actin-binding region spans residues 588–610 (ANELVETLSKAEPSYIRTIKPNQ). IQ domains follow at residues 719 to 739 (YNMAARIQRAWRRFLQRRIDA) and 740 to 765 (AIKIQRTIREKKGGNKYVKLRDYGTK). The region spanning 771–961 (KERRSMSLLG…TIYVRRGHPA (191 aa)) is the TH1 domain. Disordered stretches follow at residues 951–1015 (STIY…QKPV), 1029–1141 (YNPK…SELP), and 1217–1272 (VQFG…DDDW). The span at 980 to 1000 (IKSKKSKHKSTHKHTHSHRSH) shows a compositional bias: basic residues. The span at 1066 to 1078 (KKASSSHKSSSAK) shows a compositional bias: low complexity. A compositionally biased stretch (basic and acidic residues) spans 1089–1098 (GVEKNKEPLK). Positions 1109 to 1118 (PIPPPPPPMG) are enriched in pro residues. Residues 1120–1182 (PKDPKFEAAY…PTAYMTPYKD (63 aa)) enclose the SH3 domain. Positions 1217–1236 (VQFGSATVGPTSDNQSNPVG) are enriched in polar residues. The segment covering 1258 to 1272 (ADDDDNDDGDDDDDW) has biased composition (acidic residues).

This sequence belongs to the TRAFAC class myosin-kinesin ATPase superfamily. Myosin family. As to quaternary structure, interacts (via myosin motor domain) with SHE4; this interaction is important for proper localization and may regulate the interaction of the motor domain with actin. Interacts (via SH3 domain) with VRP1; this interaction is required for localization to sites of polarized growth and may regulate the interaction of the tail domain with actin. Interacts (via SH3 domain) with PAN1; this interaction is important for late stages of endocytopsis. Interacts (via SH3 domain) with BBC1 and LAS17. Interacts (via C-terminal acidic tail) with ARC19 and ARC40; ARC19 and ARC40 are Arp2/3 complex subunits. In terms of processing, phosphorylation of the TEDS site (Ser-357) is required for the polarization of the actin cytoskeleton and for ligand-induced, but not for constitutive internalization of STE2. Phosphorylation probably activates the myosin-I ATPase. Ser-357 is phosphorylated by CLA4 and STE20 in vitro.

It localises to the cytoplasm. The protein resides in the cytoskeleton. The protein localises to the actin patch. Functionally, one of two redundant type-I myosins implicated in the organization of the actin cytoskeleton. Required for proper actin cytoskeleton polarization and for the internalization step in endocytosis. At the cell cortex, assembles in patch-like structures together with proteins from the actin-polymerizing machinery and promotes actin assembly. Functions redundantly with LAS17 as actin nucleation-promoting factor (NPF) for the Arp2/3 complex. Motor domain phosphorylation by PAK kinases CLA4 and STE20 promotes CDC42-regulated actin assembly. Functions together with the NPF PAN1 in late stages of endocytosis. Motor domain phosphorylation by PDK1 kinases PKH1 and PKH2, and by SGK kinases YPK1 and YPK2, promotes ligand-induced, but not constitutive endocytosis of the G protein-coupled receptor STE2. The chain is Myosin-3 (MYO3) from Saccharomyces cerevisiae (strain ATCC 204508 / S288c) (Baker's yeast).